The sequence spans 267 residues: Small ribosomal subunit protein uS2 (267 aa).

The segment at 226–267 (AAAPNSASVREEEFSAESADEGKGRRAPAKKGEKKADAPAAE) is disordered. The segment covering 245–267 (DEGKGRRAPAKKGEKKADAPAAE) has biased composition (basic and acidic residues).

Belongs to the universal ribosomal protein uS2 family.

The sequence is that of Small ribosomal subunit protein uS2 from Xanthomonas oryzae pv. oryzae (strain MAFF 311018).